A 244-amino-acid chain; its full sequence is Nuclear protein UL4 homolog (244 aa).

Residues 193 to 227 (RPDDQTTPTPTPHQYTSQRRQPETNCPSSPQPAFF) are disordered. The span at 205 to 220 (HQYTSQRRQPETNCPS) shows a compositional bias: polar residues.

The protein belongs to the alphaherpesvirinae HHV-1 UL4 family.

Its subcellular location is the host nucleus. The chain is Nuclear protein UL4 homolog from Varicella-zoster virus (strain Dumas) (HHV-3).